The chain runs to 326 residues: Fructose-1,6-bisphosphatase class 1 (326 aa).

4 residues coordinate Mg(2+): E90, D111, L113, and D114. Substrate-binding positions include 114 to 117 (DGSS), Y222, and K253. Residue E259 coordinates Mg(2+).

The protein belongs to the FBPase class 1 family. In terms of assembly, homotetramer. It depends on Mg(2+) as a cofactor.

It localises to the cytoplasm. The catalysed reaction is beta-D-fructose 1,6-bisphosphate + H2O = beta-D-fructose 6-phosphate + phosphate. The protein operates within carbohydrate biosynthesis; gluconeogenesis. The protein is Fructose-1,6-bisphosphatase class 1 of Citrifermentans bemidjiense (strain ATCC BAA-1014 / DSM 16622 / JCM 12645 / Bem) (Geobacter bemidjiensis).